Reading from the N-terminus, the 371-residue chain is 4-hydroxybenzoate polyprenyltransferase, mitochondrial (371 aa).

A mitochondrion-targeting transit peptide spans 1-34; sequence MLGSRAAGFARGLRAVALAWLPGWRGRSFALARA. Residues 35–83 are Mitochondrial matrix-facing; the sequence is AGAPHGGDLQPPACPEPRGRQLSLSAAAVVDSAPRPLQPYLRLMRLDKP. A helical transmembrane segment spans residues 84–104; sequence IGTWLLYLPCTWSIGLAAEPG. The Mitochondrial intermembrane portion of the chain corresponds to 105–108; that stretch reads CFPD. The chain crosses the membrane as a helical span at residues 109–129; that stretch reads WYMLSLFGTGAILMRGAGCTI. Residues 130–148 lie on the Mitochondrial matrix side of the membrane; sequence NDMWDQDYDKKVTRTANRP. Residues 149-169 form a helical membrane-spanning segment; the sequence is IAAGDISTFQSFVFLGGQLTL. The Mitochondrial intermembrane segment spans residues 170 to 172; it reads ALG. Residues 173–193 form a helical membrane-spanning segment; sequence VLLCLNYYSIALGAGSLLLVI. Residues 194-203 are Mitochondrial matrix-facing; that stretch reads TYPLMKRISY. A helical transmembrane segment spans residues 204–224; it reads WPQLALGLTFNWGALLGWSAI. At 225 to 231 the chain is on the mitochondrial intermembrane side; that stretch reads KGSCDPS. Residues 232-252 traverse the membrane as a helical segment; the sequence is VCLPLYFSGVMWTLIYDTIYA. Residues 253–277 lie on the Mitochondrial matrix side of the membrane; it reads HQDKRDDVLIGLKSTALRFGENTKP. Residues 278–298 traverse the membrane as a helical segment; the sequence is WLSGFSVAMLGALSLVGVNSG. Residues 299–300 are Mitochondrial intermembrane-facing; the sequence is QT. A helical transmembrane segment spans residues 301–321; it reads APYYAALGAVGAHLTHQIYTL. Residues 322–332 are Mitochondrial matrix-facing; the sequence is DIHRPEDCWNK. A helical membrane pass occupies residues 333–353; sequence FISNRTLGLIVFLGIVLGNLW. The Mitochondrial intermembrane portion of the chain corresponds to 354–371; that stretch reads KEKKTDKTKKGIENKIEN.

Belongs to the UbiA prenyltransferase family. Mg(2+) serves as cofactor. In terms of tissue distribution, widely expressed. Present in all of the tissues tested. Expressed at higher level in skeletal muscle, adrenal glands and the heart.

Its subcellular location is the mitochondrion inner membrane. The enzyme catalyses an all-trans-polyprenyl diphosphate + 4-hydroxybenzoate = a 4-hydroxy-3-(all-trans-polyprenyl)benzoate + diphosphate. It carries out the reaction all-trans-decaprenyl diphosphate + 4-hydroxybenzoate = 4-hydroxy-3-(all-trans-decaprenyl)benzoate + diphosphate. The catalysed reaction is all-trans-nonaprenyl diphosphate + 4-hydroxybenzoate = 4-hydroxy-3-(all-trans-nonaprenyl)benzoate + diphosphate. Its pathway is cofactor biosynthesis; ubiquinone biosynthesis. In terms of biological role, mediates the second step in the final reaction sequence of coenzyme Q (CoQ) biosynthesis. Catalyzes the prenylation of para-hydroxybenzoate (PHB) with an all-trans polyprenyl donor (such as all-trans-decaprenyl diphosphate). The length of the polyprenyl side chain varies depending on the species, in humans, the side chain is comprised of 10 isoprenyls (decaprenyl) producing CoQ10 (also known as ubiquinone), whereas rodents predominantly generate CoQ9. However, this specificity is not complete, human tissues have low amounts of CoQ9 and rodent organs contain some CoQ10. Plays a central role in the biosynthesis of CoQ10. CoQ10 is a vital molecule that transports electrons from mitochondrial respiratory chain complexes. CoQs also function as cofactors for uncoupling protein and play a role as regulators of the extracellularly-induced ceramide-dependent apoptotic pathway. Regulates mitochondrial permeability transition pore (mPTP) opening and ROS production (pivotal events in cell death) in a tissue specific manner. This chain is 4-hydroxybenzoate polyprenyltransferase, mitochondrial, found in Homo sapiens (Human).